We begin with the raw amino-acid sequence, 248 residues long: 3-deoxy-manno-octulosonate cytidylyltransferase (248 aa).

Belongs to the KdsB family.

The protein resides in the cytoplasm. The enzyme catalyses 3-deoxy-alpha-D-manno-oct-2-ulosonate + CTP = CMP-3-deoxy-beta-D-manno-octulosonate + diphosphate. The protein operates within nucleotide-sugar biosynthesis; CMP-3-deoxy-D-manno-octulosonate biosynthesis; CMP-3-deoxy-D-manno-octulosonate from 3-deoxy-D-manno-octulosonate and CTP: step 1/1. It participates in bacterial outer membrane biogenesis; lipopolysaccharide biosynthesis. Its function is as follows. Activates KDO (a required 8-carbon sugar) for incorporation into bacterial lipopolysaccharide in Gram-negative bacteria. In Salmonella dublin (strain CT_02021853), this protein is 3-deoxy-manno-octulosonate cytidylyltransferase.